A 626-amino-acid polypeptide reads, in one-letter code: Kinesin-like protein Klp59C (626 aa).

The segment at 1–183 (MDKLSIEQKI…VRSGTTNERI (183 aa)) is globular. The interval 68-155 (CSGGNAASAN…GKNEDPGNPN (88 aa)) is disordered. Positions 72–96 (NAASANQTASISPRSMKQRIATGSL) are enriched in polar residues. Low complexity predominate over residues 101–112 (ATAPPRQQTAPP). The span at 113 to 150 (VREDEVVHQAERMRKERERRREAQARTRLDREQGKNED) shows a compositional bias: basic and acidic residues. The stretch at 115 to 150 (EDEVVHQAERMRKERERRREAQARTRLDREQGKNED) forms a coiled coil. The Kinesin motor domain maps to 187–521 (QIMVCVRKRP…LRYADRVKEL (335 aa)). 277–284 (GQTGSGKT) serves as a coordination point for ATP. The tract at residues 557–608 (ASSTSMPGGGNQAQQHTNTANDLNRSQKPTSKPTYPTSGQQLVQRKGSSQRE) is disordered.

This sequence belongs to the TRAFAC class myosin-kinesin ATPase superfamily. Kinesin family. MCAK/KIF2 subfamily.

It localises to the chromosome. Its subcellular location is the centromere. The protein localises to the kinetochore. It is found in the cytoplasm. The protein resides in the cytoskeleton. It localises to the spindle pole. In terms of biological role, required during anaphase to drive sister chromatid separation to actively depolymerize kinetochore microtubules at their kinetochore-associated plus ends, thereby contributing to chromatid mobility through a 'Pac-man' mechanism. The chain is Kinesin-like protein Klp59C (Klp59C) from Drosophila melanogaster (Fruit fly).